The chain runs to 91 residues: Small ribosomal subunit protein bS20 (91 aa).

Positions Met1–Ala23 are disordered.

This sequence belongs to the bacterial ribosomal protein bS20 family.

Functionally, binds directly to 16S ribosomal RNA. In Rhizobium rhizogenes (strain K84 / ATCC BAA-868) (Agrobacterium radiobacter), this protein is Small ribosomal subunit protein bS20.